The primary structure comprises 462 residues: MTKNHKLWGGRFESSLEKWVEEFGASISFDQKLAPYDMKASMAHVTMLGKTDIISQEEAGLIKDGLKILQDKYRAGQLTFSISNEDIHMNIESLLTAEIGEVAGKLHTARSRNDQVATDMHLYLKDKLQEMMKKLLHLRTTLVNLAENHIYTVMPGYTHLQHAQPISFGHHLMAYYNMFTRDTERLEFNMKHTNLSPLGAAALAGTTFPIDRHMTTRLLDFEKPYSNSLDAVSDRDFIIEFLSNASILMMHLSRFCEEIINWCSYEYQFITLSDTFSTGSSIMPQKKNPDMAELIRGKTGRVYGNLFSLLTVMKSLPLAYNKDLQEDKEGMFDSVETVSIAIEIMANMLETMTVNEHIMMTSTETDFSNATELADYLASKGVPFRKAHEIVGKLVLECSKNGSYLQDIPLKYYQEISELIENDIYEILTAKTAVKRRNSLGGTGFDQVKKQILLARKELKAE.

The protein belongs to the lyase 1 family. Argininosuccinate lyase subfamily.

The protein localises to the cytoplasm. It carries out the reaction 2-(N(omega)-L-arginino)succinate = fumarate + L-arginine. Its pathway is amino-acid biosynthesis; L-arginine biosynthesis; L-arginine from L-ornithine and carbamoyl phosphate: step 3/3. The sequence is that of Argininosuccinate lyase from Streptococcus agalactiae serotype V (strain ATCC BAA-611 / 2603 V/R).